The primary structure comprises 521 residues: CD166 antigen (521 aa).

Topologically, residues 1–465 are extracellular; that stretch reads GSPVFIAFRS…NREKVNDQAK (465 aa). 9 N-linked (GlcNAc...) asparagine glycosylation sites follow: asparagine 29, asparagine 33, asparagine 105, asparagine 203, asparagine 244, asparagine 299, asparagine 395, asparagine 418, and asparagine 437. Positions 63–172 constitute an Ig-like V-type 2 domain; sequence PTVVKVFKQP…YGPSGQKTVH (110 aa). Cysteine 95 and cysteine 158 are disulfide-bonded. 3 Ig-like C2-type domains span residues 183–266, 271–347, and 354–439; these read PTEQ…TAIT, DLSL…ESLT, and PQIK…LNVS. 3 disulfides stabilise this stretch: cysteine 208-cysteine 251, cysteine 292-cysteine 330, and cysteine 373-cysteine 423. A helical membrane pass occupies residues 466 to 487; it reads LIVGIVVGLLLAALVAGVVYWL. Residues 488-521 lie on the Cytoplasmic side of the membrane; that stretch reads YMKKSKTASKHVNKDLGNMEENKKLEENNHKTEA. The tract at residues 500–521 is disordered; sequence NKDLGNMEENKKLEENNHKTEA. A compositionally biased stretch (basic and acidic residues) spans 507-521; sequence EENKKLEENNHKTEA.

Homodimer. Interacts (via extracellular domain) with CD6 (via extracellular domain). Homodimerization and interaction with CD6 involve the same region and cannot occur simultaneously. The affinity for CD6 is much higher than the affinity for self-association. Interacts (via glycosylated extracellular domain) with LGALS1 and LGALS3. Interaction with LGALS1 or LGALS3 inhibits interaction with CD6. In terms of processing, glycosylated.

It is found in the cell membrane. It localises to the cell projection. The protein resides in the axon. Its subcellular location is the dendrite. Functionally, cell adhesion molecule that mediates both heterotypic cell-cell contacts via its interaction with CD6, as well as homotypic cell-cell contacts. Promotes T-cell activation and proliferation via its interactions with CD6. Contributes to the formation and maturation of the immunological synapse via its interactions with CD6. Mediates homotypic interactions with cells that express ALCAM. Mediates attachment of dendritic cells onto endothelial cells via homotypic interaction. Inhibits endothelial cell migration and promotes endothelial tube formation via homotypic interactions. Required for normal organization of the lymph vessel network. Required for normal hematopoietic stem cell engraftment in the bone marrow. Plays a role in hematopoiesis; required for normal numbers of hematopoietic stem cells in bone marrow. Promotes in vitro osteoblast proliferation and differentiation. Promotes neurite extension, axon growth and axon guidance; axons grow preferentially on surfaces that contain ALCAM. Mediates outgrowth and pathfinding for retinal ganglion cell axons. This chain is CD166 antigen (ALCAM), found in Oryctolagus cuniculus (Rabbit).